Reading from the N-terminus, the 657-residue chain is Glycogen debranching enzyme (657 aa).

The active-site Nucleophile is the D336. The Proton donor role is filled by E371. The tract at residues A460–K479 is disordered.

The protein belongs to the glycosyl hydrolase 13 family.

It catalyses the reaction Hydrolysis of (1-&gt;6)-alpha-D-glucosidic linkages to branches with degrees of polymerization of three or four glucose residues in limit dextrin.. It functions in the pathway glycan degradation; glycogen degradation. Removes maltotriose and maltotetraose chains that are attached by 1,6-alpha-linkage to the limit dextrin main chain, generating a debranched limit dextrin. The protein is Glycogen debranching enzyme of Escherichia coli O9:H4 (strain HS).